The sequence spans 254 residues: Peroxisomal membrane protein 11 homolog (254 aa).

The Cytoplasmic portion of the chain corresponds to 1–91 (MAGILSKPNY…ILALFKVKNP (91 aa)). Residues 92 to 112 (FAFLNILALIRQSGMYFYWVF) traverse the membrane as a helical segment. Residues 113–227 (DHLILGTNIG…DLIIASTLLK (115 aa)) are Lumenal-facing. The chain crosses the membrane as a helical span at residues 228-248 (IYPFSQGTIGISGIISALIGA). Residues 249 to 254 (YQMWPK) lie on the Cytoplasmic side of the membrane.

It belongs to the peroxin-11 family.

It localises to the peroxisome membrane. In terms of biological role, involved in peroxisomal proliferation. Could participate in peroxisomal elongation or fission. May be involved in parceling of peroxisomes into regular quanta. The polypeptide is Peroxisomal membrane protein 11 homolog (pex11) (Dictyostelium discoideum (Social amoeba)).